The following is a 92-amino-acid chain: Large ribosomal subunit protein bL25 (92 aa).

Belongs to the bacterial ribosomal protein bL25 family. In terms of assembly, part of the 50S ribosomal subunit; part of the 5S rRNA/L5/L18/L25 subcomplex. Contacts the 5S rRNA. Binds to the 5S rRNA independently of L5 and L18.

In terms of biological role, this is one of the proteins that binds to the 5S RNA in the ribosome where it forms part of the central protuberance. This chain is Large ribosomal subunit protein bL25, found in Photobacterium damsela subsp. piscicida (Pasteurella piscicida).